A 244-amino-acid chain; its full sequence is Ribonuclease PH (244 aa).

Residues Arg-86 and 124–126 (GTR) each bind phosphate.

This sequence belongs to the RNase PH family. As to quaternary structure, homohexameric ring arranged as a trimer of dimers.

The catalysed reaction is tRNA(n+1) + phosphate = tRNA(n) + a ribonucleoside 5'-diphosphate. Its function is as follows. Phosphorolytic 3'-5' exoribonuclease that plays an important role in tRNA 3'-end maturation. Removes nucleotide residues following the 3'-CCA terminus of tRNAs; can also add nucleotides to the ends of RNA molecules by using nucleoside diphosphates as substrates, but this may not be physiologically important. Probably plays a role in initiation of 16S rRNA degradation (leading to ribosome degradation) during starvation. The protein is Ribonuclease PH of Glaesserella parasuis serovar 5 (strain SH0165) (Haemophilus parasuis).